A 94-amino-acid chain; its full sequence is RING finger protein Z (94 aa).

Residues 1-19 are compositionally biased toward polar residues; that stretch reads MGNCNGASKSNQPDSSRVT. Residues 1–20 are disordered; it reads MGNCNGASKSNQPDSSRVTQ. A lipid anchor (N-myristoyl glycine; by host) is attached at G2. Residues 39–75 form an RING-type; atypical zinc finger; that stretch reads CKCCWFADTNLITCNDHYLCLRCHQVMLRNSDLCNIC. Positions 89-92 match the PTAP/PSAP motif motif; the sequence is PTAP.

This sequence belongs to the arenaviridae Z protein family. Interacts with protein NP; this interaction probably directs the encapsidated genome to budding sites. Interacts (via RING domain) with polymerase L; this interaction inhibits viral transcription and replication, Z partially blocks the product exit tunnel for the releasing nascent RNA product. Interacts with the glycoprotein complex; this interaction plays a role in virion budding. Interacts with host eIF4E; this interaction results in eIF4E reduced affinity for its substrate, the 5'-m7 G cap structure. Interacts (via late-budding domain) with host TSG101; this interaction is essential for budding and release of viral particles. Interacts with host RPLP0; this interaction may serve to load ribosome-like particles inside the virion. Interacts with host PML; this interaction induces PML bodies redistribution in the cytoplasm upon viral infection. Myristoylation is required for the role of RING finger protein Z in assembly and budding.

It is found in the virion. The protein resides in the host cytoplasm. Its subcellular location is the host perinuclear region. It localises to the host cell membrane. Plays a crucial role in virion assembly and budding. Expressed late in the virus life cycle, it acts as an inhibitor of viral transcription and RNA synthesis by interacting with the viral polymerase L. Presumably recruits the NP encapsidated genome to cellular membranes at budding sites via direct interaction with NP. Plays critical roles in the final steps of viral release by interacting with host TSG101, a member of the vacuolar protein-sorting pathway and using other cellular host proteins involved in vesicle formation pathway. The budding of the virus progeny occurs after association of protein Z with the viral glycoprotein complex SSP-GP1-GP2 at the cell periphery, step that requires myristoylation of protein Z. Also selectively represses protein production by associating with host eIF4E. In cell-based minigenome assay, has an inhibitory effect on the ribonucleoprotein machinery (vRNP), which is responsible for the replication and transcription of the viral genome. This is RING finger protein Z from Akodon azarae (Azara's grass mouse).